The following is a 373-amino-acid chain: Glutamate 5-kinase (373 aa).

Lysine 15 contacts ATP. Substrate is bound by residues serine 55, aspartate 142, and asparagine 154. ATP is bound by residues 174–175 (TD) and 216–222 (TGGMVTK). The region spanning 281-359 (SGRVIVDDGA…GEIEAILGYK (79 aa)) is the PUA domain.

It belongs to the glutamate 5-kinase family.

Its subcellular location is the cytoplasm. The enzyme catalyses L-glutamate + ATP = L-glutamyl 5-phosphate + ADP. The protein operates within amino-acid biosynthesis; L-proline biosynthesis; L-glutamate 5-semialdehyde from L-glutamate: step 1/2. Catalyzes the transfer of a phosphate group to glutamate to form L-glutamate 5-phosphate. This Geobacter metallireducens (strain ATCC 53774 / DSM 7210 / GS-15) protein is Glutamate 5-kinase.